A 120-amino-acid chain; its full sequence is Large ribosomal subunit protein bL19 (120 aa).

Belongs to the bacterial ribosomal protein bL19 family.

In terms of biological role, this protein is located at the 30S-50S ribosomal subunit interface and may play a role in the structure and function of the aminoacyl-tRNA binding site. The chain is Large ribosomal subunit protein bL19 from Thermodesulfovibrio yellowstonii (strain ATCC 51303 / DSM 11347 / YP87).